Consider the following 177-residue polypeptide: Bifunctional protein PyrR (177 aa).

The PRPP-binding motif lies at 99–111 (VVLVDDVLFTGRT).

Belongs to the purine/pyrimidine phosphoribosyltransferase family. PyrR subfamily.

The catalysed reaction is UMP + diphosphate = 5-phospho-alpha-D-ribose 1-diphosphate + uracil. Its function is as follows. Regulates the transcription of the pyrimidine nucleotide (pyr) operon in response to exogenous pyrimidines. Also displays a weak uracil phosphoribosyltransferase activity which is not physiologically significant. This is Bifunctional protein PyrR from Citrifermentans bemidjiense (strain ATCC BAA-1014 / DSM 16622 / JCM 12645 / Bem) (Geobacter bemidjiensis).